A 393-amino-acid polypeptide reads, in one-letter code: 8-amino-7-oxononanoate synthase (393 aa).

107–108 (GF) lines the pyridoxal 5'-phosphate pocket. H132 is a substrate binding site. Pyridoxal 5'-phosphate is bound by residues S180, 205–208 (DDAH), and 236–239 (TLSK). N6-(pyridoxal phosphate)lysine is present on K239. T353 contributes to the substrate binding site.

The protein belongs to the class-II pyridoxal-phosphate-dependent aminotransferase family. BioF subfamily. Homodimer. Requires pyridoxal 5'-phosphate as cofactor.

It carries out the reaction 6-carboxyhexanoyl-[ACP] + L-alanine + H(+) = (8S)-8-amino-7-oxononanoate + holo-[ACP] + CO2. It participates in cofactor biosynthesis; biotin biosynthesis. Functionally, catalyzes the decarboxylative condensation of pimeloyl-[acyl-carrier protein] and L-alanine to produce 8-amino-7-oxononanoate (AON), [acyl-carrier protein], and carbon dioxide. The protein is 8-amino-7-oxononanoate synthase of Coprothermobacter proteolyticus (strain ATCC 35245 / DSM 5265 / OCM 4 / BT).